A 761-amino-acid polypeptide reads, in one-letter code: Probable ATP-dependent RNA helicase DDX20 (761 aa).

Positions 26–54 (VEFSSLLLSKPVLEGLSASGFQRPSPIQL) match the Q motif motif. ATP-binding positions include Arg-48, Gln-53, 70 to 77 (AKSGTGKT), and 73 to 78 (GTGKTC). Residues 57–231 (IPLGRCGLDL…SRYMREPTFV (175 aa)) enclose the Helicase ATP-binding domain. Residues 175-178 (DEAD) carry the DEAD box motif. Residues 266–415 (SLLELFSKIP…PIPPGIMEEA (150 aa)) enclose the Helicase C-terminal domain. Disordered regions lie at residues 428–525 (PKIP…KSHT) and 570–720 (HDAH…EAGQ). A compositionally biased stretch (basic and acidic residues) spans 443–456 (KSEQMKSKPSRESH). Residues 498–512 (QHDSTITQKQQNNTL) show a composition bias toward polar residues. Composition is skewed to low complexity over residues 600 to 613 (SELSSEQKTSSESS) and 623 to 635 (ESSSSVPSKSTLE). The segment covering 655 to 679 (TLPSTRVPQQATRSKQKPCQPQSQD) has biased composition (polar residues). Positions 683-707 (HHNLPHKHRTASKSSRRPTGPKRRT) are enriched in basic residues.

This sequence belongs to the DEAD box helicase family. DDX20 subfamily. As to quaternary structure, part of the core SMN complex.

It is found in the cytoplasm. The protein resides in the nucleus. It catalyses the reaction ATP + H2O = ADP + phosphate + H(+). The catalysed reaction is a ribonucleoside 5'-triphosphate + H2O = a ribonucleoside 5'-diphosphate + phosphate + H(+). The SMN complex catalyzes the assembly of small nuclear ribonucleoproteins (snRNPs), the building blocks of the spliceosome, and thereby plays an important role in the splicing of cellular pre-mRNAs. Most spliceosomal snRNPs contain a common set of Sm proteins SNRPB, SNRPD1, SNRPD2, SNRPD3, SNRPE, SNRPF and SNRPG that assemble in a heptameric protein ring on the Sm site of the small nuclear RNA to form the core snRNP (Sm core). In the cytosol, the Sm proteins SNRPD1, SNRPD2, SNRPE, SNRPF and SNRPG are trapped in an inactive 6S pICln-Sm complex by the chaperone CLNS1A that controls the assembly of the core snRNP. To assemble core snRNPs, the SMN complex accepts the trapped 5Sm proteins from CLNS1A forming an intermediate. Binding of snRNA inside 5Sm triggers eviction of the SMN complex, thereby allowing binding of SNRPD3 and SNRPB to complete assembly of the core snRNP. May also play a role in the metabolism of small nucleolar ribonucleoprotein (snoRNPs). The polypeptide is Probable ATP-dependent RNA helicase DDX20 (ddx20) (Danio rerio (Zebrafish)).